We begin with the raw amino-acid sequence, 360 residues long: Probable CCR4-associated factor 1 homolog 1 (360 aa).

A divalent metal cation contacts are provided by aspartate 37, glutamate 39, aspartate 155, and aspartate 226.

The protein belongs to the CAF1 family. Component of the CCR4-NOT complex, at least composed of CRR4 and CAF1 proteins. It depends on a divalent metal cation as a cofactor.

The protein resides in the nucleus. It is found in the cytoplasm. It catalyses the reaction Exonucleolytic cleavage of poly(A) to 5'-AMP.. Its function is as follows. Ubiquitous transcription factor required for a diverse set of processes. It is a component of the CCR4 complex involved in the control of gene expression. The polypeptide is Probable CCR4-associated factor 1 homolog 1 (CAF1-1) (Arabidopsis thaliana (Mouse-ear cress)).